The primary structure comprises 1291 residues: Tat-binding homolog 7 (1291 aa).

The disordered stretch occupies residues 1–345 (MPRSDGFSPR…HNRGERERGR (345 aa)). Basic and acidic residues predominate over residues 64–82 (RYYEEEYHEAISSEEDERR). Positions 88 to 99 (SSNSMTYRQQVM) are enriched in polar residues. The span at 226–257 (EEEEEGAEEDEQSGEKDPEEEEDDSSNAESSE) shows a compositional bias: acidic residues. Residues 298–311 (NRHHRNRNGSRRRR) show a composition bias toward basic residues. 432–439 (GPPGTGKT) is a binding site for ATP. In terms of domain architecture, Bromo spans 914 to 1022 (ALQRQMRLFF…DAIDDLIECE (109 aa)). The segment at 1110–1194 (KSEEGTSTST…MKDASKDSTP (85 aa)) is disordered. Residues 1128–1142 (NKKKLLKKKKGQKKS) are compositionally biased toward basic residues. Over residues 1148 to 1164 (EEHDEDSTVEDAGEDTI) the composition is skewed to acidic residues. Residues 1168–1190 (LEIKKNQETPNSEHDIEMKDASK) show a composition bias toward basic and acidic residues.

This sequence belongs to the AAA ATPase family.

In terms of biological role, thought to form a complex that enhances transcription from repetitive DNA sequences by modulating chromatin structure. The sequence is that of Tat-binding homolog 7 (lex-1) from Caenorhabditis elegans.